Consider the following 516-residue polypeptide: Gamma-aminobutyrate transaminase 1, mitochondrial (516 aa).

The transit peptide at 1 to 47 (MVIARGLLRSNASSSSSQAINLLKYVTSTGSLQGHTQNLCDASTRHF) directs the protein to the mitochondrion. The segment covering 45–60 (RHFSSVPSPQSNSTEE) has biased composition (polar residues). The segment at 45 to 64 (RHFSSVPSPQSNSTEENGFK) is disordered. 171–172 (GS) contacts pyridoxal 5'-phosphate. Tyr204 lines the substrate pocket. Residue Asp311 coordinates pyridoxal 5'-phosphate. Lys340 contacts substrate. Lys340 is modified (N6-(pyridoxal phosphate)lysine).

Belongs to the class-III pyridoxal-phosphate-dependent aminotransferase family.

It localises to the mitochondrion. It carries out the reaction 4-aminobutanoate + pyruvate = succinate semialdehyde + L-alanine. It catalyses the reaction 4-aminobutanoate + glyoxylate = succinate semialdehyde + glycine. Transaminase that degrades gamma-amino butyric acid (GABA) and uses pyruvate as amino-group acceptor, but not 2-oxoglutarate. In Oryza sativa subsp. indica (Rice), this protein is Gamma-aminobutyrate transaminase 1, mitochondrial.